Here is a 129-residue protein sequence, read N- to C-terminus: Small ribosomal subunit protein uS11 (129 aa).

The protein belongs to the universal ribosomal protein uS11 family. As to quaternary structure, part of the 30S ribosomal subunit. Interacts with proteins S7 and S18. Binds to IF-3.

Its function is as follows. Located on the platform of the 30S subunit, it bridges several disparate RNA helices of the 16S rRNA. Forms part of the Shine-Dalgarno cleft in the 70S ribosome. The protein is Small ribosomal subunit protein uS11 of Methylobacterium radiotolerans (strain ATCC 27329 / DSM 1819 / JCM 2831 / NBRC 15690 / NCIMB 10815 / 0-1).